The following is a 142-amino-acid chain: ATP synthase epsilon chain (142 aa).

It belongs to the ATPase epsilon chain family. In terms of assembly, F-type ATPases have 2 components, CF(1) - the catalytic core - and CF(0) - the membrane proton channel. CF(1) has five subunits: alpha(3), beta(3), gamma(1), delta(1), epsilon(1). CF(0) has three main subunits: a, b and c.

Its subcellular location is the cell inner membrane. Produces ATP from ADP in the presence of a proton gradient across the membrane. The chain is ATP synthase epsilon chain from Shewanella sediminis (strain HAW-EB3).